Reading from the N-terminus, the 207-residue chain is Ras-related protein Rab-8A (207 aa).

GTP contacts are provided by Ser17, Gly18, Val19, Gly20, Lys21, Thr22, Cys23, Ser35, Ser39, and Thr40. Position 22 (Thr22) interacts with Mg(2+). 2 short sequence motifs (switch) span residues 31 to 45 and 63 to 80; these read DAFN…GIDF and DTAG…YYRG. 2 residues coordinate Mg(2+): Thr40 and Asp63. Gly66 serves as a coordination point for GTP. Thr72 carries the phosphothreonine modification. The GTP site is built by Asn121, Lys122, Asp124, Ala152, and Lys153. A phosphoserine mark is found at Ser181 and Ser185. Cysteine methyl ester is present on Cys204. A lipid anchor (S-geranylgeranyl cysteine) is attached at Cys204. A propeptide spans 205–207 (removed in mature form); the sequence is VLL.

The protein belongs to the small GTPase superfamily. Rab family. As to quaternary structure, interacts (GTP-bound form) with MICALL1; regulates RAB8A association with recycling endosomes. Interacts with MICALL2; competes with RAB13 and is involved in E-cadherin endocytic recycling. Interacts (GTP-bound form) with MICAL1, MICALCL, MICAL3, EHBP1 and EHBP1L1; at least in case of MICAL1, MICALCL, MICAL3 and EHBP1L1 two molecules of RAB8A can bind to one molecule of the effector protein; ternary complexes of RAB8A, RAB13 and either MICAL1 or EHBP1L1 are possible. Interacts with EHD1. Interacts with MAP4K2 and SYTL4. Interacts with SGSM1 and SGSM3. Interacts with RABIF, RIMS2, RPH3A and RPH3A. Interacts with OPTN. Interacts with RAB3IP, RAB3IP functions as guanine exchange factor (GEF). Interacts with MYO5B. Interacts with CIMAP3. Interacts with BIRC6/bruce. Interacts with OCRL. Interacts with AHI1. Interacts with DCDC1. Interacts with LRRK2; interaction facilitates phosphorylation of Thr-72. Interacts with RAB31P, GDI1, GDI2, CHM, CHML, RABGGTA, RABGGTB, TBC1D15 and INPP5B; these interactions are dependent on Thr-72 not being phosphorylated. Interacts with RILPL1 and RILPL2; these interactions are dependent on the phosphorylation of Thr-72 by LRRK2. Interacts with DZIP1; prevents inhibition by the GDP-dissociation inhibitor GDI2. Interacts (in GDP-bound form) with RAB3IP/Rabin8, RAB3IP functions as guanine exchange factor (GEF) towards RAB8A. Interacts (in GDP-bound form) with RPGR, RPGR functions as GEF towards RAB8A. Requires Mg(2+) as cofactor. Phosphorylation of Thr-72 in the switch II region by LRRK2 prevents the association of RAB regulatory proteins, including CHM, CHML and RAB GDP dissociation inhibitors GDI1 and GDI2. Phosphorylation by LRRK2 is required for localization to stressed lysosomes.

Its subcellular location is the cell membrane. The protein localises to the golgi apparatus. It localises to the endosome membrane. The protein resides in the recycling endosome membrane. It is found in the cell projection. Its subcellular location is the cilium. The protein localises to the cytoplasmic vesicle. It localises to the phagosome membrane. The protein resides in the cytoplasm. It is found in the cytoskeleton. Its subcellular location is the microtubule organizing center. The protein localises to the centrosome. It localises to the centriole. The protein resides in the cilium basal body. It is found in the midbody. Its subcellular location is the lysosome. The enzyme catalyses GTP + H2O = GDP + phosphate + H(+). Its activity is regulated as follows. Regulated by guanine nucleotide exchange factors (GEFs) such as RAB3IP/Rabin8 and RPGR which promote the exchange of bound GDP for free GTP, GTPase activating proteins (GAPs) which increase the GTP hydrolysis activity, and GDP dissociation inhibitors (GDIs) which inhibit the dissociation of the nucleotide from the GTPase. Activated in response to insulin. Its function is as follows. The small GTPases Rab are key regulators of intracellular membrane trafficking, from the formation of transport vesicles to their fusion with membranes. Rabs cycle between an inactive GDP-bound form and an active GTP-bound form that is able to recruit to membranes different sets of downstream effectors directly responsible for vesicle formation, movement, tethering and fusion. RAB8A is involved in polarized vesicular trafficking and neurotransmitter release. Together with RAB11A, RAB3IP, the exocyst complex, PARD3, PRKCI, ANXA2, CDC42 and DNMBP promotes transcytosis of PODXL to the apical membrane initiation sites (AMIS), apical surface formation and lumenogenesis. Regulates the compacted morphology of the Golgi. Together with MYO5B and RAB11A participates in epithelial cell polarization. Also involved in membrane trafficking to the cilium and ciliogenesis. Together with MICALL2, may also regulate adherens junction assembly. May play a role in insulin-induced transport to the plasma membrane of the glucose transporter GLUT4 and therefore play a role in glucose homeostasis. Involved in autophagy. Participates in the export of a subset of neosynthesized proteins through a Rab8-Rab10-Rab11-dependent endososomal export route. Targeted to and stabilized on stressed lysosomes through LRRK2 phosphorylation. Suppresses stress-induced lysosomal enlargement through EHBP1 and EHNP1L1 effector proteins. This chain is Ras-related protein Rab-8A (RAB8A), found in Bos taurus (Bovine).